The following is a 328-amino-acid chain: MNPLTKVKLINELNEREVQLGVAEKVSWHSEYKDSAWIFLGGLPYELTEGDIICVFSQYGEIVNINLVRDKKTGKSKGFCFLCYEDQRSTVLAVDNFNGIKIKGRTIRVDHVANYRAPQESEDVDDVTRELQEKGCGAKTPPSSPPEVSEDEDAKVTKKPKKDKKEKKKKKEKEKTERPVQAELPSCSRSKTVKETDEQSAKKHSSKPSERAQKSECRERKKSHSGSPDGRTSCRGRAEEPEWEAKKEKHKHEHKPSSRREGEEKSRDKDRGRSSGTHSSRHHGHSEGRSHRSRSRSRSRSPDRSHRHKKHRYSHERESFHASDRRHY.

Lysine 8 participates in a covalent cross-link: Glycyl lysine isopeptide (Lys-Gly) (interchain with G-Cter in SUMO2). The RRM domain occupies 36 to 114 (AWIFLGGLPY…RTIRVDHVAN (79 aa)). The tract at residues 118–328 (PQESEDVDDV…SFHASDRRHY (211 aa)) is disordered. Threonine 140 carries the post-translational modification Phosphothreonine. Serine 149 carries the post-translational modification Phosphoserine. The span at 157–172 (TKKPKKDKKEKKKKKE) shows a compositional bias: basic residues. Basic and acidic residues-rich tracts occupy residues 192-219 (TVKE…ECRE), 236-247 (GRAEEPEWEAKK), and 255-273 (KPSS…DRGR). Residue lysine 246 forms a Glycyl lysine isopeptide (Lys-Gly) (interchain with G-Cter in SUMO2) linkage. Serine 274 is subject to Phosphoserine. The segment covering 291 to 314 (HRSRSRSRSRSPDRSHRHKKHRYS) has biased composition (basic residues). Positions 315-328 (HERESFHASDRRHY) are enriched in basic and acidic residues.

Belongs to the IST3 family. Part of the activated spliceosome B/catalytic step 1 spliceosome, one of the forms of the spliceosome which has a well-formed active site but still cannot catalyze the branching reaction and is composed of at least 52 proteins, the U2, U5 and U6 snRNAs and the pre-mRNA. Component of the minor spliceosome, which splices U12-type introns.

It is found in the nucleus. In terms of biological role, involved in pre-mRNA splicing as component of the activated spliceosome. As a component of the minor spliceosome, involved in the splicing of U12-type introns in pre-mRNAs. The sequence is that of RNA-binding motif protein, X-linked 2 (Rbmx2) from Rattus norvegicus (Rat).